The chain runs to 663 residues: Protein associated with UVRAG as autophagy enhancer (663 aa).

Disordered regions lie at residues 1-36 and 65-136; these read MVSQSSGRQDSPVDPWEGVSDDPGNTDGLPSLLDTE and DASP…EERA. 2 stretches are compositionally biased toward polar residues: residues 80–93 and 105–130; these read TASNTKSPLGTSPL and PKGTTDSLGSSSAWGTAGNGSDSSVT. An interaction with UVRAG region spans residues 196–235; it reads EAFVLPVDAEKENAHFYVADMIISVMEKMKCNILSQQHTE. N6-acetyllysine is present on residues Lys-484, Lys-534, Lys-574, and Lys-634.

Interacts with UVRAG; the interaction is direct and promotes association with the PI3K/PI3KC3 and HOPS complexes. Interacts with STX17. Post-translationally, acetylated by KAT5/TIP60 under autophagy induction, promoting autophagosome maturation and lipid metabolism. Lys-484 and Lys-574 constitute the key sites for tuning function in autophagy.

The protein localises to the cytoplasmic vesicle. It localises to the autophagosome membrane. Regulator of autophagy that promotes autophagosome maturation by facilitating the biogenesis of phosphatidylinositol 3-phosphate (PtdIns(3)P) in late steps of autophagy. Acts by antagonizing RUBCN, thereby stimulating phosphatidylinositol 3-kinase activity of the PI3K/PI3KC3 complex. Following anchorage to the autophagosomal SNARE STX17, promotes the recruitment of PI3K/PI3KC3 and HOPS complexes to the autophagosome to regulate the fusion specificity of autophagosomes with late endosomes/lysosomes. Binds phosphoinositides phosphatidylinositol 3-phosphate (PtdIns(3)P), 4-phosphate (PtdIns(4)P) and 5-phosphate (PtdIns(5)P). In addition to its role in autophagy, acts as a regulator of lipid and glycogen homeostasis. May act as a tumor suppressor. The chain is Protein associated with UVRAG as autophagy enhancer from Bos taurus (Bovine).